The sequence spans 219 residues: GTP-binding protein Rit1 (219 aa).

Residues 28–35, 75–79, and 134–137 each bind GTP; these read GAGGVGKS, DTAGQ, and NKSD.

The protein belongs to the small GTPase superfamily. Ras family. In terms of assembly, interacts with AFDN, the C-terminal domain of RALGDS and RLF, but not with RIN1 and PIK3CA. RLF binds exclusively to the active GTP-bound form. Strongly interacts with BRAF, but only weakly with RAF1. BARF and RAF1 association is dependent upon the GTP-bound state. Interacts with RGL3. As to expression, expressed in many tissues.

It is found in the cell membrane. It catalyses the reaction GTP + H2O = GDP + phosphate + H(+). Alternates between an inactive form bound to GDP and an active form bound to GTP. Functionally, plays a crucial role in coupling NGF stimulation to the activation of both EPHB2 and MAPK14 signaling pathways and in NGF-dependent neuronal differentiation. Involved in ELK1 transactivation through the Ras-MAPK signaling cascade that mediates a wide variety of cellular functions, including cell proliferation, survival, and differentiation. This is GTP-binding protein Rit1 (Rit1) from Mus musculus (Mouse).